A 151-amino-acid chain; its full sequence is Arginine repressor (151 aa).

This sequence belongs to the ArgR family.

Its subcellular location is the cytoplasm. It functions in the pathway amino-acid biosynthesis; L-arginine biosynthesis [regulation]. In terms of biological role, regulates arginine biosynthesis genes. This is Arginine repressor from Lachnospira eligens (strain ATCC 27750 / DSM 3376 / VPI C15-48 / C15-B4) (Eubacterium eligens).